The following is a 271-amino-acid chain: L-aspartate dehydrogenase (271 aa).

The NAD(+) site is built by Ala124 and Asn192. The active site involves His222.

It belongs to the L-aspartate dehydrogenase family.

It carries out the reaction L-aspartate + NADP(+) + H2O = oxaloacetate + NH4(+) + NADPH + H(+). The catalysed reaction is L-aspartate + NAD(+) + H2O = oxaloacetate + NH4(+) + NADH + H(+). It participates in cofactor biosynthesis; NAD(+) biosynthesis; iminoaspartate from L-aspartate (dehydrogenase route): step 1/1. Functionally, specifically catalyzes the NAD or NADP-dependent dehydrogenation of L-aspartate to iminoaspartate. This is L-aspartate dehydrogenase from Methanococcoides burtonii (strain DSM 6242 / NBRC 107633 / OCM 468 / ACE-M).